A 132-amino-acid chain; its full sequence is Evasin P985 (132 aa).

The first 24 residues, Met-1–Thr-24, serve as a signal peptide directing secretion. Asn-45, Asn-69, Asn-74, Asn-103, Asn-111, and Asn-117 each carry an N-linked (GlcNAc...) asparagine glycan. Intrachain disulfides connect Cys-48/Cys-70, Cys-66/Cys-109, Cys-83/Cys-114, and Cys-104/Cys-123.

It is found in the secreted. Its function is as follows. Salivary chemokine-binding protein which binds to host chemokine CCL5. This Amblyomma parvum (South American tick) protein is Evasin P985.